The chain runs to 101 residues: NAD(P)H-quinone oxidoreductase subunit 4L, chloroplastic (101 aa).

The next 3 membrane-spanning stretches (helical) occupy residues 2 to 22 (MTEY…YGLI), 32 to 52 (MCLE…SDLF), and 61 to 81 (IFSI…PAIV).

Belongs to the complex I subunit 4L family. In terms of assembly, NDH is composed of at least 16 different subunits, 5 of which are encoded in the nucleus.

The protein resides in the plastid. It is found in the chloroplast thylakoid membrane. The catalysed reaction is a plastoquinone + NADH + (n+1) H(+)(in) = a plastoquinol + NAD(+) + n H(+)(out). It carries out the reaction a plastoquinone + NADPH + (n+1) H(+)(in) = a plastoquinol + NADP(+) + n H(+)(out). Functionally, NDH shuttles electrons from NAD(P)H:plastoquinone, via FMN and iron-sulfur (Fe-S) centers, to quinones in the photosynthetic chain and possibly in a chloroplast respiratory chain. The immediate electron acceptor for the enzyme in this species is believed to be plastoquinone. Couples the redox reaction to proton translocation, and thus conserves the redox energy in a proton gradient. The polypeptide is NAD(P)H-quinone oxidoreductase subunit 4L, chloroplastic (Calycanthus floridus var. glaucus (Eastern sweetshrub)).